The primary structure comprises 136 residues: Large ribosomal subunit protein uL16 (136 aa).

Belongs to the universal ribosomal protein uL16 family. In terms of assembly, part of the 50S ribosomal subunit.

Binds 23S rRNA and is also seen to make contacts with the A and possibly P site tRNAs. The sequence is that of Large ribosomal subunit protein uL16 from Rickettsia felis (strain ATCC VR-1525 / URRWXCal2) (Rickettsia azadi).